The following is a 397-amino-acid chain: Acetyl-CoA acetyltransferase, cytosolic (397 aa).

M1 carries the post-translational modification N-acetylmethionine. The active-site Acyl-thioester intermediate is the C92. K200 carries the post-translational modification N6-acetyllysine. R223 and S226 together coordinate CoA. K233 and K235 each carry N6-acetyllysine. S252 is a binding site for CoA. Residue C383 is the Proton donor/acceptor of the active site.

It belongs to the thiolase-like superfamily. Thiolase family. Homotetramer.

The protein localises to the cytoplasm. The protein resides in the cytosol. The catalysed reaction is 2 acetyl-CoA = acetoacetyl-CoA + CoA. Its pathway is lipid metabolism; fatty acid metabolism. Involved in the biosynthetic pathway of cholesterol. The chain is Acetyl-CoA acetyltransferase, cytosolic (Acat2) from Mus musculus (Mouse).